The sequence spans 642 residues: Forkhead box protein K2 (642 aa).

An FHA domain is found at 30-91 (VTIGRNSSQG…NGVFVDGVFQ (62 aa)). Residues 201–221 (QSENDKDASGGDSPKDDSKPP) are disordered. Positions 203–219 (ENDKDASGGDSPKDDSK) are enriched in basic and acidic residues. Positions 219 to 314 (KPPYSYAQLI…EQAFRKRRPR (96 aa)) form a DNA-binding region, fork-head. Positions 261-279 (KGWQNSIRHNLSLNRYFIK) are DNA-binding; major groove. 4 residues coordinate Mg(2+): Leu271, Ser272, Asn274, and Phe277. DNA-binding; minor groove stretches follow at residues 289–293 (KGSFW) and 309–314 (RKRRPR). 2 disordered regions span residues 323–359 (LGPLSSRSAPASPNHSGVFSAHSSGVQTPESLSREGS) and 589–615 (ASASLPTKRQNGDQSEQPDIKRGKTDE). Composition is skewed to polar residues over residues 327-353 (SSRSAPASPNHSGVFSAHSSGVQTPES) and 589-605 (ASASLPTKRQNGDQSEQ). The segment covering 606-615 (PDIKRGKTDE) has biased composition (basic and acidic residues).

In neurula embryos, expressed strongly in the future floor plate and weakly in the neural crest progenitor cells. As development progresses, expression becomes stronger in neural crest cells. At stage 24, expressed in the eye, brain, branchial arches and in the presomitic mesoderm in the posterior embryo. At stage 29, additionally expressed in the pronephric tubules. At stage 35, expressed in the migrating lateral muscle precursors of the abdomen. Additionally, the developing proctodeum and head structures including the branchial arches, eyes and otic vesicles continue to show expression. Expression also persists in the nephros.

Its subcellular location is the nucleus. The protein localises to the cytoplasm. Its function is as follows. Transcriptional regulator involved in different processes such as glucose metabolism, aerobic glycolysis and autophagy. Recognizes and binds the forkhead DNA sequence motif (5'-GTAAACA-3') and can both act as a transcription activator or repressor, depending on the context. Acts as a key regulator of metabolic reprogramming towards aerobic glycolysis, a process in which glucose is converted to lactate in the presence of oxygen. Acts as a negative regulator of autophagy in skeletal muscle: in response to starvation, enters the nucleus, binds the promoters of autophagy genes and represses their expression, preventing proteolysis of skeletal muscle proteins. In Xenopus laevis (African clawed frog), this protein is Forkhead box protein K2.